We begin with the raw amino-acid sequence, 468 residues long: Cyclin-dependent kinase 14 (468 aa).

3 positions are modified to phosphoserine: Ser-24, Ser-77, and Ser-94. The disordered stretch occupies residues 102–131; it reads FKSSSAGKESPKVRRHSSPSSPTSPKFGKA. Ser-133 is modified (phosphoserine). Residues 134-418 enclose the Protein kinase domain; it reads YEKLEKLGEG…AQAALSHEYF (285 aa). Residues 140–148 and Lys-163 each bind ATP; that span reads LGEGSYATV. The active-site Proton acceptor is the Asp-255. A disordered region spans residues 448–468; that stretch reads ESMRAFGKNSSYGKSLSNSKH. Polar residues predominate over residues 455 to 468; that stretch reads KNSSYGKSLSNSKH.

Belongs to the protein kinase superfamily. CMGC Ser/Thr protein kinase family. CDC2/CDKX subfamily. Found in a complex with LRP6, CCNY and CAPRIN2 during G2/M stage; CAPRIN2 functions as a scaffold for the complex by binding to CCNY via its N terminus and to CDK14 via its C terminus. Interacts with CCNY; CCNY mediates its recruitment to the plasma membrane and promotes phosphorylation of LRP6. Interacts with CCDN3 and CDKN1A. Interacts with SEPT8. Interacts with 14-3-3 proteina YWHAB, YWHAE, YWHAH and YWHAQ.

Its subcellular location is the cell membrane. The protein resides in the cytoplasm. It localises to the nucleus. It catalyses the reaction L-seryl-[protein] + ATP = O-phospho-L-seryl-[protein] + ADP + H(+). It carries out the reaction L-threonyl-[protein] + ATP = O-phospho-L-threonyl-[protein] + ADP + H(+). Serine/threonine-protein kinase activity is promoted by associated cyclins CCDN3 and CCNY and repressed by CDKN1A. Functionally, serine/threonine-protein kinase involved in the control of the eukaryotic cell cycle, whose activity is controlled by an associated cyclin. Acts as a cell-cycle regulator of Wnt signaling pathway during G2/M phase by mediating the phosphorylation of LRP6 at 'Ser-1490', leading to the activation of the Wnt signaling pathway. Acts as a regulator of cell cycle progression and cell proliferation via its interaction with CCDN3. Phosphorylates RB1 in vitro, however the relevance of such result remains to be confirmed in vivo. May also play a role in meiosis, neuron differentiation and may indirectly act as a negative regulator of insulin-responsive glucose transport. The polypeptide is Cyclin-dependent kinase 14 (CDK14) (Oryctolagus cuniculus (Rabbit)).